The sequence spans 176 residues: Large ribosomal subunit protein uL10 (176 aa).

This sequence belongs to the universal ribosomal protein uL10 family. Part of the ribosomal stalk of the 50S ribosomal subunit. The N-terminus interacts with L11 and the large rRNA to form the base of the stalk. The C-terminus forms an elongated spine to which L12 dimers bind in a sequential fashion forming a multimeric L10(L12)X complex.

Forms part of the ribosomal stalk, playing a central role in the interaction of the ribosome with GTP-bound translation factors. The polypeptide is Large ribosomal subunit protein uL10 (Nocardia farcinica (strain IFM 10152)).